The sequence spans 1609 residues: Probable outer membrane protein pmp21 (1609 aa).

The signal sequence occupies residues 1 to 30 (MVAKKTVRSYRSSFSHSVIVAILSAGIAFE). Positions 132–145 (FSQPTQEPDTSNAV) are enriched in polar residues. 2 disordered regions span residues 132–183 (FSQP…KSPE) and 640–677 (TAPV…EVPP). Composition is skewed to basic and acidic residues over residues 149–175 (ISSD…KEVS) and 651–672 (NKDE…KTVE). Residues 1328-1609 (ELDFSTNVWG…DFNGGIRIIF (282 aa)) enclose the Autotransporter domain.

The protein belongs to the PMP outer membrane protein family.

The protein localises to the secreted. Its subcellular location is the cell wall. The protein resides in the cell outer membrane. This chain is Probable outer membrane protein pmp21 (pmp21), found in Chlamydia pneumoniae (Chlamydophila pneumoniae).